Consider the following 425-residue polypeptide: Serine hydroxymethyltransferase (425 aa).

132–134 lines the (6S)-5,6,7,8-tetrahydrofolate pocket; it reads GHL. N6-(pyridoxal phosphate)lysine is present on K237.

It belongs to the SHMT family. As to quaternary structure, homodimer. It depends on pyridoxal 5'-phosphate as a cofactor.

Its subcellular location is the cytoplasm. The enzyme catalyses (6R)-5,10-methylene-5,6,7,8-tetrahydrofolate + glycine + H2O = (6S)-5,6,7,8-tetrahydrofolate + L-serine. It participates in one-carbon metabolism; tetrahydrofolate interconversion. It functions in the pathway amino-acid biosynthesis; glycine biosynthesis; glycine from L-serine: step 1/1. In terms of biological role, catalyzes the reversible interconversion of serine and glycine with tetrahydrofolate (THF) serving as the one-carbon carrier. This reaction serves as the major source of one-carbon groups required for the biosynthesis of purines, thymidylate, methionine, and other important biomolecules. Also exhibits THF-independent aldolase activity toward beta-hydroxyamino acids, producing glycine and aldehydes, via a retro-aldol mechanism. The polypeptide is Serine hydroxymethyltransferase (Wolbachia sp. subsp. Brugia malayi (strain TRS)).